The chain runs to 1513 residues: Exo-beta-1,6-galactobiohydrolase (1513 aa).

The first 31 residues, 1-31, serve as a signal peptide directing secretion; that stretch reads MRVLSKSLAAMVAAATLVGGGAFAVAGTAYA. Residues 666–801 form the Ricin B-type lectin domain; that stretch reads VADTTSGDSA…PSANQTWTLR (136 aa). F5/8 type C domains follow at residues 965-1112 and 1116-1273; these read AIYV…AFVT and GAAK…VFAQ. A disordered region spans residues 1456 to 1480; sequence VAPGPEEQKPGNTNKPGATGNGNKN. The segment covering 1465–1480 has biased composition (polar residues); sequence PGNTNKPGATGNGNKN. A helical transmembrane segment spans residues 1489–1509; that stretch reads VAAIAGAVALLAAAAGALFML.

This sequence belongs to the glycosyl hydrolase 30 family.

The protein localises to the cell membrane. It carries out the reaction Hydrolysis of (1-&gt;6)-beta-D-galactosidic linkages in arabinogalactan proteins and (1-&gt;3):(1-&gt;6)-beta-galactans to yield (1-&gt;6)-beta-galactobiose as the final product.. Its function is as follows. Involved in the type II arabinogalactan (AG) side chains degradation. Specifically releases the non-reducing terminal beta-1,6-galactobiose (beta-1,6-Gal2) from both dearabinosylated larch AG and polymeric beta-1,6-galactan chains by an exo-mode of action. Shows lower activity with larch AG, and very weak activity with dearabinosylated gum arabic, gum arabic and potato galactan. Can probably release beta-1,6-Gal2 from the internal side chains of type II AG. The polypeptide is Exo-beta-1,6-galactobiohydrolase (Bifidobacterium longum subsp. longum (strain ATCC 15707 / DSM 20219 / JCM 1217 / NCTC 11818 / E194b)).